The primary structure comprises 155 residues: MAHPPLEPIEALASATAQSLGFLMESVVLHSHRAPQALIVAVRKGDGSDVNLDDCASFSQAFGEALETGELLTGAYVLEITSPGLGDVLQQDRDFRSFRGFPVCVRQRDAKGGEIQREGTLLGRDADAVELNLRGRIQRIPRSDVLEVRLTSPSA.

The protein belongs to the RimP family.

It localises to the cytoplasm. Its function is as follows. Required for maturation of 30S ribosomal subunits. The sequence is that of Ribosome maturation factor RimP from Synechococcus sp. (strain RCC307).